The sequence spans 354 residues: S-adenosylmethionine:tRNA ribosyltransferase-isomerase (354 aa).

The protein belongs to the QueA family. As to quaternary structure, monomer.

The protein localises to the cytoplasm. It carries out the reaction 7-aminomethyl-7-carbaguanosine(34) in tRNA + S-adenosyl-L-methionine = epoxyqueuosine(34) in tRNA + adenine + L-methionine + 2 H(+). It participates in tRNA modification; tRNA-queuosine biosynthesis. Transfers and isomerizes the ribose moiety from AdoMet to the 7-aminomethyl group of 7-deazaguanine (preQ1-tRNA) to give epoxyqueuosine (oQ-tRNA). The polypeptide is S-adenosylmethionine:tRNA ribosyltransferase-isomerase (Pseudomonas savastanoi pv. phaseolicola (strain 1448A / Race 6) (Pseudomonas syringae pv. phaseolicola (strain 1448A / Race 6))).